The sequence spans 389 residues: Chalcone synthase (389 aa).

Cys164 is a catalytic residue.

The protein belongs to the thiolase-like superfamily. Chalcone/stilbene synthases family.

It catalyses the reaction (E)-4-coumaroyl-CoA + 3 malonyl-CoA + 3 H(+) = 2',4,4',6'-tetrahydroxychalcone + 3 CO2 + 4 CoA. Its pathway is secondary metabolite biosynthesis; flavonoid biosynthesis. Its function is as follows. The primary product of this enzyme is 4,2',4',6'-tetrahydroxychalcone (also termed naringenin-chalcone or chalcone) which can under specific conditions spontaneously isomerize into naringenin. This Casuarina glauca (Swamp oak) protein is Chalcone synthase (CHS1).